Consider the following 432-residue polypeptide: uncharacterized protein (432 aa).

The Cytochrome c domain occupies 223–432 (ASAVRGEALF…KDLIEYLKTR (210 aa)). Positions 236, 239, and 240 each coordinate heme c.

This is an uncharacterized protein from Sinorhizobium fredii (strain NBRC 101917 / NGR234).